The primary structure comprises 143 residues: Nucleoside diphosphate kinase (143 aa).

ATP contacts are provided by Lys-11, Phe-59, Arg-87, Thr-93, Arg-104, and Asn-114. His-117 acts as the Pros-phosphohistidine intermediate in catalysis.

It belongs to the NDK family. Homotetramer. The cofactor is Mg(2+).

It is found in the cytoplasm. It catalyses the reaction a 2'-deoxyribonucleoside 5'-diphosphate + ATP = a 2'-deoxyribonucleoside 5'-triphosphate + ADP. The catalysed reaction is a ribonucleoside 5'-diphosphate + ATP = a ribonucleoside 5'-triphosphate + ADP. Functionally, major role in the synthesis of nucleoside triphosphates other than ATP. The ATP gamma phosphate is transferred to the NDP beta phosphate via a ping-pong mechanism, using a phosphorylated active-site intermediate. In Shewanella pealeana (strain ATCC 700345 / ANG-SQ1), this protein is Nucleoside diphosphate kinase.